The primary structure comprises 212 residues: Imidazole glycerol phosphate synthase subunit HisH (212 aa).

The region spanning 1–210 is the Glutamine amidotransferase type-1 domain; sequence MIAVINYGAG…VRWSEAVQPK (210 aa). Cys79 serves as the catalytic Nucleophile. Catalysis depends on residues His185 and Glu187.

As to quaternary structure, heterodimer of HisH and HisF.

It is found in the cytoplasm. It carries out the reaction 5-[(5-phospho-1-deoxy-D-ribulos-1-ylimino)methylamino]-1-(5-phospho-beta-D-ribosyl)imidazole-4-carboxamide + L-glutamine = D-erythro-1-(imidazol-4-yl)glycerol 3-phosphate + 5-amino-1-(5-phospho-beta-D-ribosyl)imidazole-4-carboxamide + L-glutamate + H(+). The catalysed reaction is L-glutamine + H2O = L-glutamate + NH4(+). The protein operates within amino-acid biosynthesis; L-histidine biosynthesis; L-histidine from 5-phospho-alpha-D-ribose 1-diphosphate: step 5/9. IGPS catalyzes the conversion of PRFAR and glutamine to IGP, AICAR and glutamate. The HisH subunit catalyzes the hydrolysis of glutamine to glutamate and ammonia as part of the synthesis of IGP and AICAR. The resulting ammonia molecule is channeled to the active site of HisF. In Chloroflexus aurantiacus (strain ATCC 29364 / DSM 637 / Y-400-fl), this protein is Imidazole glycerol phosphate synthase subunit HisH.